Here is a 235-residue protein sequence, read N- to C-terminus: Large ribosomal subunit protein uL1 (235 aa).

It belongs to the universal ribosomal protein uL1 family. As to quaternary structure, part of the 50S ribosomal subunit.

Functionally, binds directly to 23S rRNA. The L1 stalk is quite mobile in the ribosome, and is involved in E site tRNA release. Its function is as follows. Protein L1 is also a translational repressor protein, it controls the translation of the L11 operon by binding to its mRNA. This is Large ribosomal subunit protein uL1 from Fusobacterium nucleatum subsp. nucleatum (strain ATCC 25586 / DSM 15643 / BCRC 10681 / CIP 101130 / JCM 8532 / KCTC 2640 / LMG 13131 / VPI 4355).